A 128-amino-acid chain; its full sequence is Large ribosomal subunit protein bL17 (128 aa).

It belongs to the bacterial ribosomal protein bL17 family. As to quaternary structure, part of the 50S ribosomal subunit. Contacts protein L32.

The sequence is that of Large ribosomal subunit protein bL17 from Streptococcus pneumoniae serotype 4 (strain ATCC BAA-334 / TIGR4).